Here is a 273-residue protein sequence, read N- to C-terminus: Transmembrane protein 45A (273 aa).

A run of 5 helical transmembrane segments spans residues 8–27 (ALPG…KNIL), 55–79 (VVVL…ALIL), 108–131 (IICF…AIFV), 153–171 (LLVF…EFLV), and 217–236 (MFLS…LIGV).

It belongs to the TMEM45 family.

It localises to the membrane. This chain is Transmembrane protein 45A (Tmem45a), found in Mus musculus (Mouse).